The following is a 549-amino-acid chain: Arginine--tRNA ligase (549 aa).

A 'HIGH' region motif is present at residues 132–142; that stretch reads ANPTGPLHIGH.

The protein belongs to the class-I aminoacyl-tRNA synthetase family. As to quaternary structure, monomer.

The protein localises to the cytoplasm. The enzyme catalyses tRNA(Arg) + L-arginine + ATP = L-arginyl-tRNA(Arg) + AMP + diphosphate. This Paenarthrobacter aurescens (strain TC1) protein is Arginine--tRNA ligase.